A 179-amino-acid chain; its full sequence is Large ribosomal subunit protein uL6 (179 aa).

It belongs to the universal ribosomal protein uL6 family. In terms of assembly, part of the 50S ribosomal subunit.

In terms of biological role, this protein binds to the 23S rRNA, and is important in its secondary structure. It is located near the subunit interface in the base of the L7/L12 stalk, and near the tRNA binding site of the peptidyltransferase center. The protein is Large ribosomal subunit protein uL6 of Mycolicibacterium gilvum (strain PYR-GCK) (Mycobacterium gilvum (strain PYR-GCK)).